We begin with the raw amino-acid sequence, 242 residues long: GLIPR1-like protein 1 (242 aa).

Residues 1-22 (MALKNKFSCLWILGLCLVATTS) form the signal peptide. One can recognise an SCP domain in the interval 39-171 (EAHNEWRGKV…ASTAIFVCNY (133 aa)). A glycan (N-linked (GlcNAc...) asparagine) is linked at Asn119. Gly221 is lipidated: GPI-anchor amidated glycine. Residues 222–242 (RAPQQTAFNPFSLGFLLLRIF) constitute a propeptide, removed in mature form.

This sequence belongs to the CRISP family. Part of a oolemmal binding multimeric complex (IZUMO1 complex) composed at least of IZUMO1 and GLIPR1L1; the complex assemblage is influenced by the maturation status of the male germ cell. Interacts with IZUMO1. In terms of processing, N-glycosylated. N-glycosylation decreases during the transit in the caput. Highly expressed in testis.

It localises to the cytoplasmic vesicle. The protein resides in the secretory vesicle. It is found in the acrosome. The protein localises to the cell membrane. Its subcellular location is the membrane raft. It localises to the secreted. Its function is as follows. Required for optimal fertilization at the stage of sperm-oocyte fusion, plays a role in optimizing acrosome function, the translocation of IZUMO1 during the acrosome reaction and the fertilization process. Component of epididymosomes, one type of membranous microvesicules which mediate the transfer of lipids and proteins to spermatozoa plasma membrane during epididymal maturation. Also component of the CD9-positive microvesicules found in the cauda region. This Homo sapiens (Human) protein is GLIPR1-like protein 1 (GLIPR1L1).